Reading from the N-terminus, the 319-residue chain is Acetyl-coenzyme A carboxylase carboxyl transferase subunit beta (319 aa).

The CoA carboxyltransferase N-terminal domain occupies 24-293 (LWIKCPDTGQ…MIEQEPEPSA (270 aa)). The interval 282–319 (PEMIEQEPEPSAPVPPDEPDEPAATQEAPPAAPAAPPA) is disordered.

It belongs to the AccD/PCCB family. As to quaternary structure, acetyl-CoA carboxylase is a heterohexamer composed of biotin carboxyl carrier protein (AccB), biotin carboxylase (AccC) and two subunits each of ACCase subunit alpha (AccA) and ACCase subunit beta (AccD).

The protein resides in the cytoplasm. It catalyses the reaction N(6)-carboxybiotinyl-L-lysyl-[protein] + acetyl-CoA = N(6)-biotinyl-L-lysyl-[protein] + malonyl-CoA. The protein operates within lipid metabolism; malonyl-CoA biosynthesis; malonyl-CoA from acetyl-CoA: step 1/1. Component of the acetyl coenzyme A carboxylase (ACC) complex. Biotin carboxylase (BC) catalyzes the carboxylation of biotin on its carrier protein (BCCP) and then the CO(2) group is transferred by the transcarboxylase to acetyl-CoA to form malonyl-CoA. This chain is Acetyl-coenzyme A carboxylase carboxyl transferase subunit beta, found in Nitrobacter winogradskyi (strain ATCC 25391 / DSM 10237 / CIP 104748 / NCIMB 11846 / Nb-255).